A 414-amino-acid polypeptide reads, in one-letter code: Esterase FrsA (414 aa).

Belongs to the FrsA family.

It catalyses the reaction a carboxylic ester + H2O = an alcohol + a carboxylate + H(+). In terms of biological role, catalyzes the hydrolysis of esters. This chain is Esterase FrsA, found in Citrobacter koseri (strain ATCC BAA-895 / CDC 4225-83 / SGSC4696).